Here is a 145-residue protein sequence, read N- to C-terminus: D-aminoacyl-tRNA deacylase (145 aa).

Residues 137–138 (GP) carry the Gly-cisPro motif, important for rejection of L-amino acids motif.

It belongs to the DTD family. In terms of assembly, homodimer.

Its subcellular location is the cytoplasm. The catalysed reaction is glycyl-tRNA(Ala) + H2O = tRNA(Ala) + glycine + H(+). It catalyses the reaction a D-aminoacyl-tRNA + H2O = a tRNA + a D-alpha-amino acid + H(+). Functionally, an aminoacyl-tRNA editing enzyme that deacylates mischarged D-aminoacyl-tRNAs. Also deacylates mischarged glycyl-tRNA(Ala), protecting cells against glycine mischarging by AlaRS. Acts via tRNA-based rather than protein-based catalysis; rejects L-amino acids rather than detecting D-amino acids in the active site. By recycling D-aminoacyl-tRNA to D-amino acids and free tRNA molecules, this enzyme counteracts the toxicity associated with the formation of D-aminoacyl-tRNA entities in vivo and helps enforce protein L-homochirality. The polypeptide is D-aminoacyl-tRNA deacylase (Photorhabdus laumondii subsp. laumondii (strain DSM 15139 / CIP 105565 / TT01) (Photorhabdus luminescens subsp. laumondii)).